The primary structure comprises 210 residues: Redox-sensing transcriptional repressor Rex (210 aa).

Positions 16–55 form a DNA-binding region, H-T-H motif; that stretch reads VYSRHLTDVDRKGIVTISSGDIAEGVGVSPAQVRKDLAYF. NAD(+) is bound at residue 90–95; the sequence is GMGNLG.

The protein belongs to the transcriptional regulatory Rex family. In terms of assembly, homodimer.

Its subcellular location is the cytoplasm. Its function is as follows. Modulates transcription in response to changes in cellular NADH/NAD(+) redox state. This Desulfitobacterium hafniense (strain DSM 10664 / DCB-2) protein is Redox-sensing transcriptional repressor Rex.